A 262-amino-acid chain; its full sequence is ATP synthase subunit a (262 aa).

5 helical membrane-spanning segments follow: residues 24–44 (AVHLDTLFFSLLAGVIFLFVF), 84–104 (VIAPLALTIFCWVFIMNAIDL), 129–149 (DISATLGMSICVFFLILFYTV), 194–214 (LFGNMYAGELIFILIAVMYMA), and 228–248 (LVWAIFHILVITLQAFIFMML).

Belongs to the ATPase A chain family. In terms of assembly, F-type ATPases have 2 components, CF(1) - the catalytic core - and CF(0) - the membrane proton channel. CF(1) has five subunits: alpha(3), beta(3), gamma(1), delta(1), epsilon(1). CF(0) has three main subunits: a(1), b(2) and c(9-12). The alpha and beta chains form an alternating ring which encloses part of the gamma chain. CF(1) is attached to CF(0) by a central stalk formed by the gamma and epsilon chains, while a peripheral stalk is formed by the delta and b chains.

It localises to the cell inner membrane. Its function is as follows. Key component of the proton channel; it plays a direct role in the translocation of protons across the membrane. In Actinobacillus pleuropneumoniae serotype 3 (strain JL03), this protein is ATP synthase subunit a.